The primary structure comprises 335 residues: ATP-dependent 6-phosphofructokinase (335 aa).

ATP is bound at residue Gly-11. An ADP-binding site is contributed by 21–25 (RAVVR). ATP contacts are provided by residues 72-73 (RY) and 102-105 (GDGS). Asp-103 contributes to the Mg(2+) binding site. 125-127 (TID) is a substrate binding site. Asp-127 (proton acceptor) is an active-site residue. Residue Arg-154 coordinates ADP. Substrate is bound by residues Arg-162 and 169–171 (MGR). Residues 185 to 187 (GAD) and 213 to 215 (KKH) each bind ADP. Substrate is bound by residues Glu-222, Arg-244, and 250 to 253 (HIQR).

The protein belongs to the phosphofructokinase type A (PFKA) family. ATP-dependent PFK group I subfamily. Prokaryotic clade 'B1' sub-subfamily. Homotetramer. It depends on Mg(2+) as a cofactor.

It is found in the cytoplasm. It carries out the reaction beta-D-fructose 6-phosphate + ATP = beta-D-fructose 1,6-bisphosphate + ADP + H(+). Its pathway is carbohydrate degradation; glycolysis; D-glyceraldehyde 3-phosphate and glycerone phosphate from D-glucose: step 3/4. With respect to regulation, allosterically activated by ADP and other diphosphonucleosides, and allosterically inhibited by phosphoenolpyruvate. Its function is as follows. Catalyzes the phosphorylation of D-fructose 6-phosphate to fructose 1,6-bisphosphate by ATP, the first committing step of glycolysis. This Streptococcus pneumoniae serotype 4 (strain ATCC BAA-334 / TIGR4) protein is ATP-dependent 6-phosphofructokinase.